A 224-amino-acid chain; its full sequence is tRNA pseudouridine synthase B (224 aa).

D46 serves as the catalytic Nucleophile.

It belongs to the pseudouridine synthase TruB family. Type 1 subfamily.

It catalyses the reaction uridine(55) in tRNA = pseudouridine(55) in tRNA. Functionally, responsible for synthesis of pseudouridine from uracil-55 in the psi GC loop of transfer RNAs. The chain is tRNA pseudouridine synthase B from Methylococcus capsulatus (strain ATCC 33009 / NCIMB 11132 / Bath).